A 133-amino-acid chain; its full sequence is Ribosome-binding factor A (133 aa).

Belongs to the RbfA family. Monomer. Binds 30S ribosomal subunits, but not 50S ribosomal subunits or 70S ribosomes.

It localises to the cytoplasm. One of several proteins that assist in the late maturation steps of the functional core of the 30S ribosomal subunit. Associates with free 30S ribosomal subunits (but not with 30S subunits that are part of 70S ribosomes or polysomes). Required for efficient processing of 16S rRNA. May interact with the 5'-terminal helix region of 16S rRNA. This is Ribosome-binding factor A from Salmonella schwarzengrund (strain CVM19633).